A 71-amino-acid polypeptide reads, in one-letter code: Frenatin 2.3S (71 aa).

The signal sequence occupies residues 1–22; the sequence is MAFLKKSLFLVLFLGLVSLSMG. Residues 21–56 are disordered; sequence MGEREKREEEEEEEEENKEEEANEEGKGESEEKRGL. A propeptide spanning residues 23–54 is cleaved from the precursor; sequence EREKREEEEEEEEENKEEEANEEGKGESEEKR. The segment covering 28 to 43 has biased composition (acidic residues); that stretch reads EEEEEEEEENKEEEAN. Residues 44 to 55 show a composition bias toward basic and acidic residues; that stretch reads EEGKGESEEKRG. Position 70 is a glycine amide; in Frenatin 2.1S (glycine 70).

This sequence belongs to the frog skin active peptide (FSAP) family. Frenatin subfamily. Post-translationally, frenatin 2.3S is not amidated. As to expression, expressed by the skin glands.

Its subcellular location is the secreted. In terms of biological role, antimicrobial peptide with potent activity against Gram-negative bacteria. Shows immunostimulatory actions both in vitro and in vivo. In vitro, is cytotoxic to non-small cell lung adenocarcinoma A549 cells. Also, stimulates production of pro-inflammatory cytokines by mouse peritoneal macrophages and down-regulates production of the anti-inflammatory cytokine IL-10 by lipopolysaccharide (LPS)-stimulated cells. In vivo, intraperitoneal injection in mice enhances the activation state and homing capacity of Th1 type lymphocytes and promotes the recruitment, activation and tumoricidal capacities of peritoneal NK cells. Has a very weak activity in stimulation of insulin release and a weak hemolytic activity. Antimicrobial peptide with potent activity against some Gram-positive and Gram-negative bacteria. Has a multifunctional mode of action. It displays depolarization and bacterial cell leakage, and can also internalize into bacterial cells and alter specific gene expression involved in bacterial resistance mechanisms. Does not agglutinate bacteria and lipid vesicles, even a high concentrations. Also displays moderate cellular protection against yellow fever virus (YFV)-infected Vero cells without causing significant cytotoxicity. Shows a weak hemolytic activity, and is not cytotoxic to monocytes. Frenatin 2.3S (version without Gly-71) shows no or very weak antibacterial activity, shows no or very weak cytotoxicity to lung adenocarcinoma A549 cells and shows very weak hemolysis. It only stimulates production of pro-inflammatory cytokines IL-23 (but not IL-1beta and TNF-alpha) by mouse peritoneal macrophages and has no effect on the production of the anti-inflammatory cytokine IL-10. Frenatin 2.3S (version without Gly-71) very weakly stimulates insulin release. The chain is Frenatin 2.3S from Sphaenorhynchus lacteus (Orinoco lime treefrog).